A 463-amino-acid chain; its full sequence is 3-isopropylmalate dehydratase large subunit (463 aa).

The [4Fe-4S] cluster site is built by C347, C407, and C410.

The protein belongs to the aconitase/IPM isomerase family. LeuC type 1 subfamily. In terms of assembly, heterodimer of LeuC and LeuD. The cofactor is [4Fe-4S] cluster.

It catalyses the reaction (2R,3S)-3-isopropylmalate = (2S)-2-isopropylmalate. It functions in the pathway amino-acid biosynthesis; L-leucine biosynthesis; L-leucine from 3-methyl-2-oxobutanoate: step 2/4. Catalyzes the isomerization between 2-isopropylmalate and 3-isopropylmalate, via the formation of 2-isopropylmaleate. The protein is 3-isopropylmalate dehydratase large subunit of Buchnera aphidicola subsp. Cinara cedri (strain Cc).